Here is a 463-residue protein sequence, read N- to C-terminus: Asparagine--tRNA ligase (463 aa).

The protein belongs to the class-II aminoacyl-tRNA synthetase family. As to quaternary structure, homodimer.

It is found in the cytoplasm. It catalyses the reaction tRNA(Asn) + L-asparagine + ATP = L-asparaginyl-tRNA(Asn) + AMP + diphosphate + H(+). The protein is Asparagine--tRNA ligase of Bacillus cereus (strain ZK / E33L).